Consider the following 148-residue polypeptide: UPF0134 protein MPN_204 (148 aa).

It belongs to the UPF0134 family.

This is UPF0134 protein MPN_204 from Mycoplasma pneumoniae (strain ATCC 29342 / M129 / Subtype 1) (Mycoplasmoides pneumoniae).